The following is a 146-amino-acid chain: Hemoglobin subunit beta-1/2 (146 aa).

Position 1 is an N-acetylvaline (V1). A Globin domain is found at 2–146 (HLTPDEKNAV…VATALAHKYH (145 aa)). Phosphoserine is present on S44. K59 bears the N6-acetyllysine mark. H63 and H92 together coordinate heme b. At C93 the chain carries S-nitrosocysteine. K144 carries the N6-acetyllysine modification.

This sequence belongs to the globin family. Heterotetramer of two alpha chains and two beta chains. Red blood cells.

In terms of biological role, involved in oxygen transport from the lung to the various peripheral tissues. The sequence is that of Hemoglobin subunit beta-1/2 (HBB) from Otolemur crassicaudatus (Brown greater galago).